The primary structure comprises 158 residues: NAD(P)H-quinone oxidoreductase subunit J, chloroplastic (158 aa).

The protein belongs to the complex I 30 kDa subunit family. In terms of assembly, NDH is composed of at least 16 different subunits, 5 of which are encoded in the nucleus.

It localises to the plastid. The protein localises to the chloroplast thylakoid membrane. The enzyme catalyses a plastoquinone + NADH + (n+1) H(+)(in) = a plastoquinol + NAD(+) + n H(+)(out). It catalyses the reaction a plastoquinone + NADPH + (n+1) H(+)(in) = a plastoquinol + NADP(+) + n H(+)(out). In terms of biological role, NDH shuttles electrons from NAD(P)H:plastoquinone, via FMN and iron-sulfur (Fe-S) centers, to quinones in the photosynthetic chain and possibly in a chloroplast respiratory chain. The immediate electron acceptor for the enzyme in this species is believed to be plastoquinone. Couples the redox reaction to proton translocation, and thus conserves the redox energy in a proton gradient. In Cicer arietinum (Chickpea), this protein is NAD(P)H-quinone oxidoreductase subunit J, chloroplastic.